Reading from the N-terminus, the 406-residue chain is Probable sodium/metabolite cotransporter BASS1, chloroplastic (406 aa).

A chloroplast-targeting transit peptide spans 1–64 (MPLLRRPPAA…RHLCGIPSSR (64 aa)). Transmembrane regions (helical) follow at residues 98 to 118 (VGEV…AVAL), 123 to 143 (AFLW…MLGM), 152 to 172 (LKTA…QYSV), 187 to 209 (PSYY…SNIV), 217 to 237 (VALS…LTPL), 252 to 272 (MGLF…GALL), 278 to 298 (GLVQ…VAVL), 315 to 335 (LQVV…GYVL), and 376 to 396 (VPCA…AGIW).

It belongs to the bile acid:sodium symporter (BASS) (TC 2.A.28) family.

The protein localises to the membrane. Its subcellular location is the plastid. It localises to the chloroplast envelope. Its function is as follows. May function as sodium-coupled metabolite transporter across the chloroplast envelope. This is Probable sodium/metabolite cotransporter BASS1, chloroplastic (BASS1) from Oryza sativa subsp. japonica (Rice).